The primary structure comprises 655 residues: Bifunctional lysine-specific demethylase and histidyl-hydroxylase NO66 (655 aa).

The segment covering 1–16 (MEKVTNSAAAKPQGNN) has biased composition (polar residues). Disordered regions lie at residues 1–48 (MEKV…LSDM) and 67–122 (EDTD…QGAS). Over residues 76–86 (STSSKEAAAAK) the composition is skewed to low complexity. Residues 87-96 (TADHERRLQA) are compositionally biased toward basic and acidic residues. Ser131 is modified (phosphoserine). A Phosphothreonine modification is found at Thr137. Ser138 is modified (phosphoserine). A disordered region spans residues 185 to 210 (KAPEEGNNNNDEKEMSTETSEPHKTD). A compositionally biased stretch (basic and acidic residues) spans 194–210 (NDEKEMSTETSEPHKTD). Residues 307–452 (CSIRLLHASA…NLLETLMPMV (146 aa)) enclose the JmjC domain. The Fe cation site is built by His353, Asp355, and His418.

It belongs to the ROX family. NO66 subfamily. Fe(2+) is required as a cofactor.

It is found in the nucleus. The catalysed reaction is N(6),N(6)-dimethyl-L-lysyl(36)-[histone H3] + 2 2-oxoglutarate + 2 O2 = L-lysyl(36)-[histone H3] + 2 formaldehyde + 2 succinate + 2 CO2. In terms of biological role, oxygenase that can act as both a histone lysine demethylase and a ribosomal histidine hydroxylase. Specifically demethylates 'Lys-4' (H3K4me) and 'Lys-36' (H3K36me) of histone H3, thereby playing a central role in histone code. This chain is Bifunctional lysine-specific demethylase and histidyl-hydroxylase NO66, found in Drosophila sechellia (Fruit fly).